The following is an 88-amino-acid chain: Kunitz-type kappaPI-theraphotoxin-Hs1b (88 aa).

The signal sequence occupies residues Met-1 to Ala-27. A propeptide spanning residues Asp-28–Arg-33 is cleaved from the precursor. Residues Cys-37–Cys-85 enclose the BPTI/Kunitz inhibitor domain. 3 disulfide bridges follow: Cys-37–Cys-85, Cys-46–Cys-68, and Cys-60–Cys-81.

This sequence belongs to the venom Kunitz-type family. 02 (native) subfamily. Expressed by the venom gland.

It localises to the secreted. Its function is as follows. Serine protease inhibitor that inhibits trypsin at a molar ratio of 1:1. This is Kunitz-type kappaPI-theraphotoxin-Hs1b from Cyriopagopus schmidti (Chinese bird spider).